The sequence spans 486 residues: MARRIKFQRLAEMRPTMTRFSTVALIVSKSSPNIFYDKMSGTERGVLSLTIRDSPNHLTNCKCWGQRDCVDEYAAMLQIGHVVDIVGAKVMSIPFAAPGEQRYQPQATVSCALVVNEGSGYVVRHDNDDFGQITILQQLLHQPIRPLGAVLKLADVRSGLGFPDKIITTNVNLLVVVAAVRPVRQIKRKLQGPLSEVQELLQCLEVIVIDASYPEGMLLSVWQPDWIQRAQQWQPRRTVLHLIDVRVSYSNFHRSLVLSHSNCTLICENPQAAGDDCRLLLAFAATVPLTTFSGCDQAELDNMPAVASIQAQMTVRQIYSRAEGELQDPSIHQFTAVLYGMVTKFDLDGLTSHVNRKCIACQQHIPRNLQDCASDACQQYFSLDNDEPRSISYFNINIHLSDQTGTLVEARLAGHPAERILGLRAEDFERLAEREKSELKWRFLLKYFEVRLMIKKPVGVRNHLVIVVVDMQAIPLEKLVANMVVF.

The segment at residues Ile166–Ala285 is a DNA-binding region (OB).

This sequence belongs to the MEIOB family. As to quaternary structure, interacts with mei-9 and Ercc1.

Functionally, single-stranded DNA-binding protein required for meiosis. May be involved in the resolution of recombination intermediates into crossovers in the meiotic recombination pathway. This Drosophila melanogaster (Fruit fly) protein is Protein hold'em (hdm).